Reading from the N-terminus, the 396-residue chain is Aldo-keto reductase ausK (396 aa).

Position 76 (Asp-76) interacts with NADP(+). Tyr-81 functions as the Proton donor in the catalytic mechanism. His-156 serves as a coordination point for substrate. Residues Cys-186–Asn-187, Gln-212, Asp-241–Arg-251, and Arg-317–Asn-325 each bind NADP(+).

It belongs to the aldo/keto reductase family. Aldo/keto reductase 2 subfamily. In terms of assembly, homodimer.

The protein operates within secondary metabolite biosynthesis; terpenoid biosynthesis. Functionally, aldo-keto reductase; part of the gene cluster that mediates the biosynthesis of calidodehydroaustin, a fungal meroterpenoid. The first step of the pathway is the synthesis of 3,5-dimethylorsellinic acid by the polyketide synthase ausA. 3,5-dimethylorsellinic acid is then prenylated by the polyprenyl transferase ausN. Further epoxidation by the FAD-dependent monooxygenase ausM and cyclization by the probable terpene cyclase ausL lead to the formation of protoaustinoid A. Protoaustinoid A is then oxidized to spiro-lactone preaustinoid A3 by the combined action of the FAD-binding monooxygenases ausB and ausC, and the dioxygenase ausE. Acid-catalyzed keto-rearrangement and ring contraction of the tetraketide portion of preaustinoid A3 by ausJ lead to the formation of preaustinoid A4. The aldo-keto reductase ausK, with the help of ausH, is involved in the next step by transforming preaustinoid A4 into isoaustinone which is in turn hydroxylated by the P450 monooxygenase ausI to form austinolide. The cytochrome P450 monooxygenase ausG modifies austinolide to austinol. Austinol is further acetylated to austin by the O-acetyltransferase ausP, which spontaneously changes to dehydroaustin. The cytochrome P450 monooxygenase ausR then converts dehydroaustin is into 7-dehydrodehydroaustin. The hydroxylation catalyzed by ausR permits the O-acetyltransferase ausQ to add an additional acetyl group to the molecule, leading to the formation of acetoxydehydroaustin. The short chain dehydrogenase ausT catalyzes the reduction of the double bond present between carbon atoms 1 and 2 to convert 7-dehydrodehydroaustin into 1,2-dihydro-7-hydroxydehydroaustin. AusQ catalyzes not only an acetylation reaction but also the addition of the PKS ausV diketide product to 1,2-dihydro-7-hydroxydehydroaustin, forming precalidodehydroaustin. Finally, the iron/alpha-ketoglutarate-dependent dioxygenase converts precalidodehydroaustin into calidodehydroaustin. The protein is Aldo-keto reductase ausK of Aspergillus calidoustus.